The chain runs to 223 residues: MAAVGACFLQQLAVVALLALWCSHGAIASDPGLLQDFCVVDKMSQVRVNGFPCKDAKDVVAGDFFFSGLHMAGNTTNKQGSNVTTVNVAQIPGLNTMGVSLVRIDYAPNGLNPPHTHPRATEIPTVLEGSLYVGFVISNPENKLFTKVLNKGDVFVFPQGLVHFQFNNGTNNAVALAALSSQNPGVITVGNAVFGSKPSISDDILAKAFQVDKNIIDRIQAQF.

A signal peptide spans 1–28 (MAAVGACFLQQLAVVALLALWCSHGAIA). A disulfide bond links cysteine 38 and cysteine 53. The Cupin type-1 domain maps to 67-217 (SGLHMAGNTT…AFQVDKNIID (151 aa)). Residues asparagine 74 and asparagine 82 are each glycosylated (N-linked (GlcNAc...) asparagine). The Mn(2+) site is built by histidine 115, histidine 117, glutamate 122, and histidine 163. The N-linked (GlcNAc...) asparagine glycan is linked to asparagine 168.

It belongs to the germin family. Oligomer (believed to be a pentamer but probably hexamer).

The protein resides in the secreted. Its subcellular location is the extracellular space. The protein localises to the apoplast. Its function is as follows. May play a role in plant defense. Probably has no oxalate oxidase activity even if the active site is conserved. The chain is Putative germin-like protein 2-2 from Oryza sativa subsp. japonica (Rice).